Reading from the N-terminus, the 354-residue chain is 3-dehydroquinate synthase (354 aa).

Residues 100–104, 124–125, K136, K145, and 163–166 contribute to the NAD(+) site; these read GATGD, TT, and FLKT. E178, H242, and H256 together coordinate Zn(2+).

It belongs to the sugar phosphate cyclases superfamily. Dehydroquinate synthase family. It depends on NAD(+) as a cofactor. Co(2+) is required as a cofactor. Requires Zn(2+) as cofactor.

The protein localises to the cytoplasm. It catalyses the reaction 7-phospho-2-dehydro-3-deoxy-D-arabino-heptonate = 3-dehydroquinate + phosphate. The protein operates within metabolic intermediate biosynthesis; chorismate biosynthesis; chorismate from D-erythrose 4-phosphate and phosphoenolpyruvate: step 2/7. Functionally, catalyzes the conversion of 3-deoxy-D-arabino-heptulosonate 7-phosphate (DAHP) to dehydroquinate (DHQ). The sequence is that of 3-dehydroquinate synthase from Staphylococcus aureus (strain MSSA476).